A 393-amino-acid polypeptide reads, in one-letter code: MITMIRRFIRLDAAAGMMLMMATVLAIALANWSVTAAGYQQFLMIPVEMRFGALEINKNLLLWINDALMAIFFLLIGLEVKRELVEGTLASRQQAMLPLAAAVGGMVFPALLFLLFNANDDVTRAGWAIPAATDIAFAIGVLTLLGKRVPAGLKVFLLALAIIDDLGAILIIALFYTQQVFWPALAGAVLAIAVLAYMNKLQVGKTSAYLLVGGVLWVCILKCGVHATLAGVIVGFFIPLRTSDGEPSPATSLEHGLQTWVAFLIVPLFAFANAGIVLQGIVLEKLFSPLSLGIAAGLLLGKPLGITLFSWLTIRLGYARLPVGVHFNQIVAVSVLCGIGFTMSIFITLLAFSGGDAELITYAKLGILLASGLAALLGYLALRGVLPALDKAV.

Helical transmembrane passes span 14-34, 60-80, 96-116, 125-145, 155-175, 179-199, 218-238, 263-283, 292-312, 330-350, and 362-382; these read AAGM…NWSV, LLLW…GLEV, MLPL…FLLF, AGWA…LTLL, VFLL…IALF, QVFW…AYMN, VCIL…GFFI, FLIV…GIVL, LGIA…FSWL, IVAV…ITLL, and YAKL…YLAL.

It belongs to the NhaA Na(+)/H(+) (TC 2.A.33) antiporter family.

The protein resides in the cell inner membrane. It catalyses the reaction Na(+)(in) + 2 H(+)(out) = Na(+)(out) + 2 H(+)(in). Its function is as follows. Na(+)/H(+) antiporter that extrudes sodium in exchange for external protons. This Pectobacterium atrosepticum (strain SCRI 1043 / ATCC BAA-672) (Erwinia carotovora subsp. atroseptica) protein is Na(+)/H(+) antiporter NhaA.